The primary structure comprises 293 residues: uncharacterized protein (293 aa).

The active site involves aspartate 119.

The protein belongs to the pseudouridine synthase RluA family.

It catalyses the reaction a uridine in RNA = a pseudouridine in RNA. This is an uncharacterized protein from Helicobacter pylori (strain J99 / ATCC 700824) (Campylobacter pylori J99).